The following is a 490-amino-acid chain: Dipeptide and tripeptide permease A (490 aa).

Residues 1 to 34 lie on the Cytoplasmic side of the membrane; it reads MSNANNNQPENVSLNAFKQPRAFYLIFSIELWER. Residues 35–55 traverse the membrane as a helical segment; the sequence is FGYYGLQGIMAVYLVKMLGMT. The Periplasmic portion of the chain corresponds to 56-59; sequence EADS. A helical membrane pass occupies residues 60 to 80; that stretch reads ITLFSSFSALVYGFVAIGGWL. Over 81–89 the chain is Cytoplasmic; the sequence is GDKVLGAKR. Residues 90-110 traverse the membrane as a helical segment; the sequence is VIMLGALVLAIGYAFVAYSGH. Position 111 (Asp111) is a topological domain, periplasmic. A helical membrane pass occupies residues 112-132; the sequence is LSLVYVGMATIAVGNGLFKAN. Topologically, residues 133-153 are cytoplasmic; the sequence is PSSLLSTCYEKNDPRLDGAFT. The chain crosses the membrane as a helical span at residues 154–174; the sequence is MYYMSVNIGSFFSMLATPWLA. Residues 175–176 are Periplasmic-facing; the sequence is AR. A helical membrane pass occupies residues 177 to 197; sequence FGWSVAFSLSVVGMLITLVNF. At 198–217 the chain is on the cytoplasmic side; the sequence is MMCRRWVKDQGSKPDFAPLQ. Residues 218-238 form a helical membrane-spanning segment; the sequence is VGKLMMTLVGVVILVAISTWL. Over 239–246 the chain is Periplasmic; it reads LHNQTIAR. Residues 247-267 traverse the membrane as a helical segment; the sequence is WALAIISAGIILIFAKETFAL. The Cytoplasmic segment spans residues 268 to 274; that stretch reads QGGARRK. Residues 275 to 295 traverse the membrane as a helical segment; that stretch reads MIVAFLLMLEAVVFFVLYSQM. The Periplasmic segment spans residues 296 to 320; it reads PTSLNFFAIHNVEHSIFGIAFEPEQ. Residues 321–341 traverse the membrane as a helical segment; the sequence is YQALNPFWIMVASPILAAIYN. Over 342-352 the chain is Cytoplasmic; it reads KMGDRLPMPHK. Residues 353–373 form a helical membrane-spanning segment; that stretch reads FAIGMVLCSGAFLVLPWGASF. Topologically, residues 374–383 are periplasmic; sequence ANEAGIVSVN. Residues 384-404 traverse the membrane as a helical segment; the sequence is WLILSYALQSIGELMISGLGL. Over 405-414 the chain is Cytoplasmic; the sequence is AMVAQLVPQR. The chain crosses the membrane as a helical span at residues 415 to 435; the sequence is LMGFIMGSWFLTTAAAALIAG. Residues 436-460 are Periplasmic-facing; it reads KVAALTAVPGGEVADPHASLAIYSH. Residues 461-481 traverse the membrane as a helical segment; it reads VFMQIGLATAVIAVLMLLTAP. Residues 482–490 lie on the Cytoplasmic side of the membrane; sequence KLNRMTLGD.

It belongs to the major facilitator superfamily. Proton-dependent oligopeptide transporter (POT/PTR) (TC 2.A.17) family. DtpA subfamily.

Its subcellular location is the cell inner membrane. In terms of biological role, proton-dependent permease that transports di- and tripeptides. The sequence is that of Dipeptide and tripeptide permease A from Edwardsiella piscicida.